Here is an 819-residue protein sequence, read N- to C-terminus: Tegument protein UL47 homolog (819 aa).

Basic residues predominate over residues M1–R15. 2 disordered regions span residues M1–P42 and L58–S221. The short motif at S11 to R31 is the Nuclear localization signal element. Positions Y32 to P42 are enriched in polar residues. The span at M62–D72 shows a compositional bias: acidic residues. Polar residues predominate over residues S82–T93. Positions S94–N109 are enriched in basic and acidic residues. A run of 5 repeats spans residues D117–E132, D133–E148, D149–E164, D165–E190, and D191–E206. The interval D117–D218 is 6 X 16 AA approximate tandem repeats. Residues A118–Y219 show a composition bias toward acidic residues. The 1-6; truncated repeat unit spans residues D207–D218. Residues Q785 to D807 carry the Nuclear export signal motif.

Belongs to the alphaherpesvirinae HHV-1 UL47 family. In terms of assembly, interacts with US3 kinase. Interacts with ORF24 and ORF27; these interactions seem important for efficient virion nuclear egress. Interacts with ORF17/VHS. Interacts with ORF9. In terms of processing, phosphorylated by US3. This phosphorylation is required for proper nuclear localization.

It localises to the virion tegument. It is found in the host nucleus. The protein resides in the host cytoplasm. In terms of biological role, tegument protein that can bind to various RNA transcripts. Plays a role in the attenuation of selective viral and cellular mRNA degradation by modulating the activity of host shutoff RNase ORF17/VHS. Also plays a role in the primary envelopment of virions in the perinuclear space, probably by interacting with two nuclear egress proteins ORF24 and ORF27. The protein is Tegument protein UL47 homolog of Varicella-zoster virus (strain Dumas) (HHV-3).